Reading from the N-terminus, the 483-residue chain is Glutamyl-tRNA(Gln) amidotransferase subunit A (483 aa).

Catalysis depends on charge relay system residues Lys-77 and Ser-152. The active-site Acyl-ester intermediate is Ser-176.

It belongs to the amidase family. GatA subfamily. As to quaternary structure, heterotrimer of A, B and C subunits.

It catalyses the reaction L-glutamyl-tRNA(Gln) + L-glutamine + ATP + H2O = L-glutaminyl-tRNA(Gln) + L-glutamate + ADP + phosphate + H(+). Its function is as follows. Allows the formation of correctly charged Gln-tRNA(Gln) through the transamidation of misacylated Glu-tRNA(Gln) in organisms which lack glutaminyl-tRNA synthetase. The reaction takes place in the presence of glutamine and ATP through an activated gamma-phospho-Glu-tRNA(Gln). In Listeria monocytogenes serotype 4b (strain F2365), this protein is Glutamyl-tRNA(Gln) amidotransferase subunit A.